Reading from the N-terminus, the 140-residue chain is Chromatin accessibility complex 16kD protein (140 aa).

The tract at residues 111 to 140 (LNRSAGSDDDDDDDDDDDEEESESESESDE) is disordered. Residues 117–140 (SDDDDDDDDDDDEEESESESESDE) are compositionally biased toward acidic residues.

In terms of assembly, component of the chromatin accessibility complex (CHRAC), composed of Chrac-14, Chrac-16, Acf and Iswi. Forms a heterodimer with Chrac-14. The Chrac-14/Chrac-16 heterodimer interacts with Acf (via N-terminus). Stabilizes the interaction between Chrac-14 and Iswi.

It is found in the nucleus. Its function is as follows. Histone-like protein which promotes nucleosome sliding of ATP-dependent nucleosome remodeling complexes. Part of the chromatin-accessibility complex (CHRAC) which uses energy/ATP to increase the general accessibility of DNA in chromatin. As a heterodimer with Chrac-14, binds DNA and facilitates nucleosome sliding by Acf. As part of the CHRAC complex, required for oogenesis. The polypeptide is Chromatin accessibility complex 16kD protein (Drosophila melanogaster (Fruit fly)).